The sequence spans 30 residues: Glucagon-like peptide (30 aa).

Arginine amide is present on Arg30.

It belongs to the glucagon family.

It is found in the secreted. The chain is Glucagon-like peptide from Anguilla anguilla (European freshwater eel).